Here is a 283-residue protein sequence, read N- to C-terminus: Acetylglutamate kinase (283 aa).

Substrate is bound by residues 64 to 65 (GG), Arg86, and Asn178.

It belongs to the acetylglutamate kinase family. ArgB subfamily.

The protein localises to the cytoplasm. The catalysed reaction is N-acetyl-L-glutamate + ATP = N-acetyl-L-glutamyl 5-phosphate + ADP. It participates in amino-acid biosynthesis; L-arginine biosynthesis; N(2)-acetyl-L-ornithine from L-glutamate: step 2/4. Functionally, catalyzes the ATP-dependent phosphorylation of N-acetyl-L-glutamate. The polypeptide is Acetylglutamate kinase (Lactococcus lactis subsp. lactis (strain IL1403) (Streptococcus lactis)).